Here is a 340-residue protein sequence, read N- to C-terminus: MNFKSICLIILLSALIIPYIPQNIYFFPHRNTTGATISSGLYVNPYLYYTSPPAPAGIASFGLYNYSGNVTPYVITTNEMLGYVNITSLLAYNREALRYGVDPYSATLQFNIVLSVNTSNGVYAYWLQDVGQFQTNKNSLTFIDNVWNLTGSLSTLSSSAITGNGQVASAGGGQTFYYDVGPSYTYSFPLSYIYIINMSYTSNAVYVWIGYEIIQIGQTEYGTVNYYDKITIYQPNIISASLMINGNNYTPNGLYYDAELVWGGGGNGAPTSFNSLNCTLGLYYISNGSITPVPSLYTFGADTAEAAYNVYTTMNNGVPIAYNGIENLTILTNNFSVILI.

A signal peptide spans 1-28; sequence MNFKSICLIILLSALIIPYIPQNIYFFP. Positions 29–41 are excised as a propeptide; that stretch reads HRNTTGATISSGL. Residues Asn31, Asn65, Asn85, Asn117, Asn148, Asn197, Asn277, Asn287, Asn327, and Asn334 are each glycosylated (N-linked (GlcNAc...) asparagine).

It belongs to the peptidase A5 family.

It is found in the secreted. The catalysed reaction is Specificity similar to pepsin A, prefers bulky hydrophobic side-chains on either side of the scissible bond.. May represent a new class of acid proteases. It digests proteins and peptides in acidic solution. The sequence is that of Thermopsin (thpS) from Sulfolobus acidocaldarius (strain ATCC 33909 / DSM 639 / JCM 8929 / NBRC 15157 / NCIMB 11770).